The primary structure comprises 79 residues: uncharacterized protein (79 aa).

This sequence belongs to the asfivirus D79L family.

This is an uncharacterized protein from Ornithodoros (relapsing fever ticks).